Reading from the N-terminus, the 231-residue chain is Orotate phosphoribosyltransferase (231 aa).

Residues Lys-27, 79-80 (YK), Arg-106, Lys-107, Lys-110, His-112, and 133-141 (DDVMTAGTA) contribute to the 5-phospho-alpha-D-ribose 1-diphosphate site. Thr-137 and Arg-166 together coordinate orotate.

Belongs to the purine/pyrimidine phosphoribosyltransferase family. PyrE subfamily. Homodimer. Requires Mg(2+) as cofactor.

It carries out the reaction orotidine 5'-phosphate + diphosphate = orotate + 5-phospho-alpha-D-ribose 1-diphosphate. It functions in the pathway pyrimidine metabolism; UMP biosynthesis via de novo pathway; UMP from orotate: step 1/2. Functionally, catalyzes the transfer of a ribosyl phosphate group from 5-phosphoribose 1-diphosphate to orotate, leading to the formation of orotidine monophosphate (OMP). The chain is Orotate phosphoribosyltransferase from Bifidobacterium animalis subsp. lactis (strain AD011).